We begin with the raw amino-acid sequence, 277 residues long: ATP synthase subunit delta (277 aa).

Belongs to the ATPase delta chain family. As to quaternary structure, F-type ATPases have 2 components, F(1) - the catalytic core - and F(0) - the membrane proton channel. F(1) has five subunits: alpha(3), beta(3), gamma(1), delta(1), epsilon(1). F(0) has three main subunits: a(1), b(2) and c(10-14). The alpha and beta chains form an alternating ring which encloses part of the gamma chain. F(1) is attached to F(0) by a central stalk formed by the gamma and epsilon chains, while a peripheral stalk is formed by the delta and b chains.

The protein localises to the cell membrane. Functionally, f(1)F(0) ATP synthase produces ATP from ADP in the presence of a proton or sodium gradient. F-type ATPases consist of two structural domains, F(1) containing the extramembraneous catalytic core and F(0) containing the membrane proton channel, linked together by a central stalk and a peripheral stalk. During catalysis, ATP synthesis in the catalytic domain of F(1) is coupled via a rotary mechanism of the central stalk subunits to proton translocation. This protein is part of the stalk that links CF(0) to CF(1). It either transmits conformational changes from CF(0) to CF(1) or is implicated in proton conduction. This chain is ATP synthase subunit delta, found in Frankia alni (strain DSM 45986 / CECT 9034 / ACN14a).